A 105-amino-acid polypeptide reads, in one-letter code: ENTATVVVDERTDNGDGNFNYNFQTSNGIEDTKTGTPGSQGQSNMQGTFRFLLPDGTTAEVRYVADEFGYRPESPLLPVGPELPPHVHELLRIAEEQRAQGITFE.

One can recognise a Chitin-binding type R&amp;R domain in the interval 16-81 (DGNFNYNFQT…PESPLLPVGP (66 aa)). Residues 25–46 (TSNGIEDTKTGTPGSQGQSNMQ) are disordered.

In terms of tissue distribution, arthrodial membrane.

This is Cuticle protein AM1159 from Cancer pagurus (Rock crab).